We begin with the raw amino-acid sequence, 371 residues long: Chitin deacetylase (371 aa).

An N-terminal signal peptide occupies residues 1–20 (MLCRLFTLFITAALACCVAA). Residues 73-112 (PKPEPEPTAVPTMAPEPTTVPPTEPSGTYPPETTPTVEPT) form a disordered region. Composition is skewed to low complexity over residues 79 to 89 (PTAVPTMAPEP) and 102 to 112 (PPETTPTVEPT). Residues C164 and C358 are joined by a disulfide bond. N-linked (GlcNAc...) asparagine glycosylation occurs at N167. In terms of domain architecture, NodB homology spans 168–353 (GTIALTFDDG…EIKKRGLRAV (186 aa)). The active-site Proton acceptor is D175. D175 contacts acetate. Positions 176, 228, and 232 each coordinate Co(2+). Residue N239 is glycosylated (N-linked (GlcNAc...) asparagine). Acetate is bound at residue Y270. H327 functions as the Proton donor in the catalytic mechanism.

It belongs to the polysaccharide deacetylase family. The cofactor is Co(2+).

It catalyses the reaction [(1-&gt;4)-N-acetyl-beta-D-glucosaminyl](n) + n H2O = chitosan + n acetate. Its function is as follows. Hydrolyzes the N-acetamido groups of N-acetyl-D-glucosamine residues in chitin to form chitosan and acetate. This Arthroderma benhamiae (strain ATCC MYA-4681 / CBS 112371) (Trichophyton mentagrophytes) protein is Chitin deacetylase.